The sequence spans 83 residues: MQAGIHPEYNEVVFQDISTGETFLTRSTIEKTSGDTITLDGKEYPLVRIEVSSASHPFFTGKQSLVDTEGRVEKFRQKYGMRK.

It belongs to the bacterial ribosomal protein bL31 family. Type B subfamily. As to quaternary structure, part of the 50S ribosomal subunit.

In terms of biological role, binds the 23S rRNA. The polypeptide is Large ribosomal subunit protein bL31B (Hydrogenovibrio crunogenus (strain DSM 25203 / XCL-2) (Thiomicrospira crunogena)).